The chain runs to 234 residues: Ubiquinone biosynthesis O-methyltransferase (234 aa).

Positions 36, 56, 77, and 125 each coordinate S-adenosyl-L-methionine.

This sequence belongs to the methyltransferase superfamily. UbiG/COQ3 family.

It catalyses the reaction a 3-demethylubiquinol + S-adenosyl-L-methionine = a ubiquinol + S-adenosyl-L-homocysteine + H(+). The catalysed reaction is a 3-(all-trans-polyprenyl)benzene-1,2-diol + S-adenosyl-L-methionine = a 2-methoxy-6-(all-trans-polyprenyl)phenol + S-adenosyl-L-homocysteine + H(+). It functions in the pathway cofactor biosynthesis; ubiquinone biosynthesis. In terms of biological role, O-methyltransferase that catalyzes the 2 O-methylation steps in the ubiquinone biosynthetic pathway. The protein is Ubiquinone biosynthesis O-methyltransferase of Actinobacillus pleuropneumoniae serotype 5b (strain L20).